The chain runs to 84 residues: Cell division topological specificity factor (84 aa).

Belongs to the MinE family.

Its function is as follows. Prevents the cell division inhibition by proteins MinC and MinD at internal division sites while permitting inhibition at polar sites. This ensures cell division at the proper site by restricting the formation of a division septum at the midpoint of the long axis of the cell. This chain is Cell division topological specificity factor, found in Burkholderia cenocepacia (strain ATCC BAA-245 / DSM 16553 / LMG 16656 / NCTC 13227 / J2315 / CF5610) (Burkholderia cepacia (strain J2315)).